Consider the following 267-residue polypeptide: Proenkephalin-A (267 aa).

The N-terminal stretch at 1–24 is a signal peptide; that stretch reads MARFLTLCTWLLLLGPGLLATVRA. Intrachain disulfides connect Cys26-Cys48, Cys30-Cys52, and Cys33-Cys65. A compositionally biased stretch (basic and acidic residues) spans 163–175; it reads TGDNRERSHHQDG. The tract at residues 163 to 182 is disordered; the sequence is TGDNRERSHHQDGSDNEEEV. 2 propeptides span residues 196–207 and 217–227; these read SPQLEDEAKELQ and VGRPEWWMDYQ. Residue Ser251 is modified to Phosphoserine.

This sequence belongs to the opioid neuropeptide precursor family. Post-translationally, proenkephalin-A is cleaved by CTSL to generate Met-enkephalin. Processed and degraded by ACE. In terms of processing, probably cleaved by ACE. Post-translationally, processed by ACE to generate Met-enkephalin in the nucleus accumbens of the brain. The N-terminal domain contains 6 conserved cysteines thought to be involved in disulfide bonding and/or processing.

It localises to the cytoplasmic vesicle. It is found in the secretory vesicle. The protein resides in the chromaffin granule lumen. The protein localises to the secreted. Functionally, neuropeptide that competes with and mimic the effects of opiate drugs. They play a role in a number of physiologic functions, including pain perception and responses to stress. Its function is as follows. Met-enkephalin-Arg-Phe neuropeptide acts as a strong ligand of Mu-type opioid receptor OPRM1. Met-enkephalin-Arg-Phe-binding to OPRM1 in the nucleus accumbens of the brain increases activation of OPRM1, leading to long-term synaptic depression of glutamate release. Increases glutamate release in the striatum and decreases GABA concentration in the striatum. In terms of biological role, increases glutamate release in the striatum. The polypeptide is Proenkephalin-A (Homo sapiens (Human)).